The chain runs to 661 residues: Fusaric acid cluster transcription factor FUB12 (661 aa).

Residues 17-48 (CVPCRTRKIKCNAAVVGLPCGSCVSRECPDEC) constitute a DNA-binding region (zn(2)-C6 fungal-type). Disordered stretches follow at residues 57 to 131 (TVKG…RPPG) and 151 to 185 (SAAQ…QLDD). A compositionally biased stretch (polar residues) spans 73–98 (PDTNGSILSPRQQQLPTNVSRQTTDS). Over residues 99 to 109 (SHSDPVEESIH) the composition is skewed to basic and acidic residues. The span at 110 to 119 (ASHTGSSLRN) shows a compositional bias: polar residues. Positions 120–129 (DTPHSRDRRP) are enriched in basic and acidic residues.

It localises to the nucleus. Its function is as follows. Transcription factor that is involved in the formation of the two Fusaric acid derivatives, dehydrofusaric acid and fusarinolic acid, serving as a detoxification mechanism. The sequence is that of Fusaric acid cluster transcription factor FUB12 from Gibberella fujikuroi (strain CBS 195.34 / IMI 58289 / NRRL A-6831) (Bakanae and foot rot disease fungus).